A 781-amino-acid polypeptide reads, in one-letter code: Aconitate hydratase, mitochondrial (781 aa).

The N-terminal 27 residues, 1–27 (MAPYSLLVTRLQKALGVRQYHVASVLC), are a transit peptide targeting the mitochondrion. Gln28 carries the pyrrolidone carboxylic acid modification. At Lys31 the chain carries N6-succinyllysine. Lys50 bears the N6-acetyllysine; alternate mark. Lys50 carries the post-translational modification N6-succinyllysine; alternate. Gln99 provides a ligand contact to substrate. 2 positions are modified to N6-acetyllysine; alternate: Lys138 and Lys144. 2 positions are modified to N6-succinyllysine; alternate: Lys138 and Lys144. 192–194 (DSH) serves as a coordination point for substrate. Lys233 bears the N6-acetyllysine; alternate mark. Lys233 is subject to N6-succinyllysine; alternate. Residue Cys385 participates in [4Fe-4S] cluster binding. Lys411 carries the post-translational modification N6-succinyllysine. The [4Fe-4S] cluster site is built by Cys448 and Cys451. 2 residues coordinate substrate: Arg474 and Arg479. Lys517 and Lys523 each carry N6-acetyllysine; alternate. Residues Lys517 and Lys523 each carry the N6-succinyllysine; alternate modification. Residues 524-537 (LEAPDADELPRAEF) are compositionally biased toward basic and acidic residues. Residues 524 to 561 (LEAPDADELPRAEFDPGQDTYQHPPKDSSGQRVDVSPT) form a disordered region. Position 549 is an N6-succinyllysine (Lys549). A compositionally biased stretch (polar residues) spans 551–561 (SSGQRVDVSPT). Ser559 carries the post-translational modification Phosphoserine. Lys573 carries the post-translational modification N6-acetyllysine; alternate. Position 573 is an N6-succinyllysine; alternate (Lys573). An N6-succinyllysine mark is found at Lys577 and Lys591. Position 605 is an N6-acetyllysine; alternate (Lys605). An N6-succinyllysine; alternate modification is found at Lys605. A substrate-binding site is contributed by Arg607. Residue Lys628 is modified to N6-succinyllysine. Residue Ser670 is modified to Phosphoserine. 670–671 (SR) contributes to the substrate binding site. N6-succinyllysine is present on Lys689. N6-acetyllysine; alternate is present on residues Lys723 and Lys730. Residues Lys723 and Lys730 each carry the N6-succinyllysine; alternate modification. 3 positions are modified to N6-acetyllysine: Lys736, Lys739, and Lys743.

Belongs to the aconitase/IPM isomerase family. In terms of assembly, monomer. [4Fe-4S] cluster is required as a cofactor. Post-translationally, forms covalent cross-links mediated by transglutaminase TGM2, between a glutamine and the epsilon-amino group of a lysine residue, forming homopolymers and heteropolymers.

It is found in the mitochondrion. The catalysed reaction is citrate = D-threo-isocitrate. Its pathway is carbohydrate metabolism; tricarboxylic acid cycle; isocitrate from oxaloacetate: step 2/2. Its function is as follows. Catalyzes the isomerization of citrate to isocitrate via cis-aconitate. This is Aconitate hydratase, mitochondrial (ACO2) from Sus scrofa (Pig).